Reading from the N-terminus, the 577-residue chain is Arginine--tRNA ligase (577 aa).

Residues 122-132 (PNVAKEMHVGH) carry the 'HIGH' region motif.

It belongs to the class-I aminoacyl-tRNA synthetase family. In terms of assembly, monomer.

It is found in the cytoplasm. The catalysed reaction is tRNA(Arg) + L-arginine + ATP = L-arginyl-tRNA(Arg) + AMP + diphosphate. This chain is Arginine--tRNA ligase, found in Salmonella enteritidis PT4 (strain P125109).